The sequence spans 188 residues: Peptidyl-tRNA hydrolase (188 aa).

A tRNA-binding site is contributed by Tyr-14. The active-site Proton acceptor is the His-19. Residues Tyr-64, Asn-66, and Asn-112 each contribute to the tRNA site.

The protein belongs to the PTH family. As to quaternary structure, monomer.

It is found in the cytoplasm. It catalyses the reaction an N-acyl-L-alpha-aminoacyl-tRNA + H2O = an N-acyl-L-amino acid + a tRNA + H(+). Functionally, hydrolyzes ribosome-free peptidyl-tRNAs (with 1 or more amino acids incorporated), which drop off the ribosome during protein synthesis, or as a result of ribosome stalling. Catalyzes the release of premature peptidyl moieties from peptidyl-tRNA molecules trapped in stalled 50S ribosomal subunits, and thus maintains levels of free tRNAs and 50S ribosomes. The protein is Peptidyl-tRNA hydrolase of Clostridium tetani (strain Massachusetts / E88).